The primary structure comprises 340 residues: 3-isopropylmalate dehydrogenase (340 aa).

Positions 88, 98, 122, and 212 each coordinate substrate. Residues D212, D236, and D240 each contribute to the Mg(2+) site. An NAD(+)-binding site is contributed by G272–D284.

This sequence belongs to the isocitrate and isopropylmalate dehydrogenases family. LeuB type 2 subfamily. In terms of assembly, homodimer. The cofactor is Mg(2+). Mn(2+) serves as cofactor.

The protein resides in the cytoplasm. The catalysed reaction is (2R,3S)-3-isopropylmalate + NAD(+) = 4-methyl-2-oxopentanoate + CO2 + NADH. It functions in the pathway amino-acid biosynthesis; L-leucine biosynthesis; L-leucine from 3-methyl-2-oxobutanoate: step 3/4. Functionally, catalyzes the oxidation of 3-carboxy-2-hydroxy-4-methylpentanoate (3-isopropylmalate) to 3-carboxy-4-methyl-2-oxopentanoate. The product decarboxylates to 4-methyl-2 oxopentanoate. The chain is 3-isopropylmalate dehydrogenase (leuB) from Corynebacterium glutamicum (strain ATCC 13032 / DSM 20300 / JCM 1318 / BCRC 11384 / CCUG 27702 / LMG 3730 / NBRC 12168 / NCIMB 10025 / NRRL B-2784 / 534).